Reading from the N-terminus, the 408-residue chain is Imidazolonepropionase (408 aa).

Positions 73 and 75 each coordinate Fe(3+). Residues histidine 73 and histidine 75 each coordinate Zn(2+). 4-imidazolone-5-propanoate is bound by residues arginine 82, tyrosine 145, and histidine 178. N-formimidoyl-L-glutamate is bound at residue tyrosine 145. Position 243 (histidine 243) interacts with Fe(3+). Histidine 243 lines the Zn(2+) pocket. Glutamine 246 is a 4-imidazolone-5-propanoate binding site. Aspartate 318 provides a ligand contact to Fe(3+). Aspartate 318 lines the Zn(2+) pocket. N-formimidoyl-L-glutamate is bound by residues asparagine 320 and glycine 322. A 4-imidazolone-5-propanoate-binding site is contributed by serine 323.

This sequence belongs to the metallo-dependent hydrolases superfamily. HutI family. Zn(2+) serves as cofactor. It depends on Fe(3+) as a cofactor.

It localises to the cytoplasm. The enzyme catalyses 4-imidazolone-5-propanoate + H2O = N-formimidoyl-L-glutamate. It functions in the pathway amino-acid degradation; L-histidine degradation into L-glutamate; N-formimidoyl-L-glutamate from L-histidine: step 3/3. Catalyzes the hydrolytic cleavage of the carbon-nitrogen bond in imidazolone-5-propanoate to yield N-formimidoyl-L-glutamate. It is the third step in the universal histidine degradation pathway. This is Imidazolonepropionase from Shewanella woodyi (strain ATCC 51908 / MS32).